We begin with the raw amino-acid sequence, 726 residues long: Catalase-peroxidase (726 aa).

Residues 1 to 13 (MSMSEETNNSLSS) show a composition bias toward polar residues. A disordered region spans residues 1–34 (MSMSEETNNSLSSGKCPFHHGGSDQSAGEGTGSR). The tryptophyl-tyrosyl-methioninium (Trp-Tyr) (with M-252) cross-link spans 105 to 226 (WHGAGTYRSV…LAATEMGLIY (122 aa)). His-106 serves as the catalytic Proton acceptor. The tryptophyl-tyrosyl-methioninium (Tyr-Met) (with W-105) cross-link spans 226–252 (YVNPEGPNASGEPLSAAAAIRATFGNM). Residue His-267 participates in heme b binding.

It belongs to the peroxidase family. Peroxidase/catalase subfamily. Homodimer or homotetramer. Requires heme b as cofactor. Formation of the three residue Trp-Tyr-Met cross-link is important for the catalase, but not the peroxidase activity of the enzyme.

The catalysed reaction is H2O2 + AH2 = A + 2 H2O. It catalyses the reaction 2 H2O2 = O2 + 2 H2O. Bifunctional enzyme with both catalase and broad-spectrum peroxidase activity. The protein is Catalase-peroxidase of Enterobacter sp. (strain 638).